Reading from the N-terminus, the 394-residue chain is MAKQKFDRSKAHVNIGTIGHIDHGKTTLTAAICTYLAKKGGAKAMKYDEIDKAPEEKARGITINTAHVEYETENRHYAHVDCPGHADYVKNMITGAAQMDGAILVVAASDGPMPQTREHILLARQVGVPKMVVFLNKCDMVSDAEMQDLVEMEVRELLSSYGFDGDNTPVIRGSALKALEGDATWEAKIDELMASVDSYIPTPTRDTDKPFLLAVEDVMTITGRGTVVTGRVERGTLKLNDEVEIVGIHDTRKAVVTGMEMLRKTLDEVKAGDNAGILLRGIDRKDVERGQVLAKPGSIKPHKQFEAEIYALKKEEGGRHTPVLNGYRPQFYFRTTDVTGQITLDKGVEMINPGDNTKITVELISPIAVEEGSKFSIREGGRTVGAGTVTKVIK.

Positions 10–204 (KAHVNIGTIG…SVDSYIPTPT (195 aa)) constitute a tr-type G domain. Positions 19–26 (GHIDHGKT) are G1. 19–26 (GHIDHGKT) is a GTP binding site. Thr26 provides a ligand contact to Mg(2+). Residues 60-64 (GITIN) form a G2 region. Residues 81 to 84 (DCPG) are G3. GTP-binding positions include 81–85 (DCPGH) and 136–139 (NKCD). The tract at residues 136 to 139 (NKCD) is G4. The segment at 174 to 176 (SAL) is G5.

The protein belongs to the TRAFAC class translation factor GTPase superfamily. Classic translation factor GTPase family. EF-Tu/EF-1A subfamily. As to quaternary structure, monomer.

Its subcellular location is the cytoplasm. It catalyses the reaction GTP + H2O = GDP + phosphate + H(+). Functionally, GTP hydrolase that promotes the GTP-dependent binding of aminoacyl-tRNA to the A-site of ribosomes during protein biosynthesis. This is Elongation factor Tu from Malacoplasma penetrans (strain HF-2) (Mycoplasma penetrans).